Consider the following 181-residue polypeptide: Protein Syd (181 aa).

It belongs to the Syd family.

The protein localises to the cell inner membrane. Its function is as follows. Interacts with the SecY protein in vivo. May bind preferentially to an uncomplexed state of SecY, thus functioning either as a chelating agent for excess SecY in the cell or as a regulatory factor that negatively controls the translocase function. The chain is Protein Syd from Alteromonas mediterranea (strain DSM 17117 / CIP 110805 / LMG 28347 / Deep ecotype).